Here is a 1148-residue protein sequence, read N- to C-terminus: Envelopment polyprotein (1148 aa).

The signal sequence occupies residues 1–23 (MGKSSPVCLYLILQGLLLFDTVN). Residues 24–496 (AKNLNELKME…PGLHGWATVL (473 aa)) are Lumenal-facing. Intrachain disulfides connect Cys-34–Cys-159, Cys-68–Cys-165, Cys-117–Cys-136, Cys-141–Cys-146, Cys-183–Cys-193, and Cys-218–Cys-257. Asn-142 carries an N-linked (GlcNAc...) asparagine; by host glycan. A glycan (N-linked (GlcNAc...) asparagine; by host) is linked at Asn-357. Disulfide bonds link Cys-386/Cys-445, Cys-390/Cys-399, Cys-415/Cys-434, and Cys-462/Cys-485. Residue Asn-409 is glycosylated (N-linked (GlcNAc...) asparagine; by host). Residues 497-517 (LLLTFCFGWVLIPTITMILLK) form a helical membrane-spanning segment. At 518–637 (ILIAFAYLCS…LSLFRYRSRF (120 aa)) the chain is on the cytoplasmic side. A binding to the ribonucleoprotein region spans residues 526-543 (CSKYNTDSKFRILVEKVK). CCHC-type zinc fingers lie at residues 555 to 575 (CEVC…RKSC) and 580 to 601 (CPYC…FKVC). Binding to the ribonucleoprotein regions lie at residues 598-615 (FKVC…KKSL) and 621-635 (MQGC…RYRS). The ITAM domain occupies 621–644 (MQGCYRTLSLFRYRSRFFVGLVWC). Residues 625–628 (YRTL) carry the YxxL motif. Residues 638–658 (FVGLVWCMLLVLELIVWAASA) traverse the membrane as a helical segment. Over 659 to 1115 (ETQNLNDGWT…WVLGVLNGNW (457 aa)) the chain is Lumenal. Cystine bridges form between Cys-745–Cys-780, Cys-749–Cys-787, Cys-761–Cys-894, Cys-775–Cys-905, Cys-790–Cys-913, Cys-816–Cys-825, Cys-833–Cys-842, and Cys-873–Cys-877. A fusion loop region spans residues 767-787 (YEYETGWGCNPPDCPGVGTGC). Asn-937 is a glycosylation site (N-linked (GlcNAc...) asparagine; by host). Disulfide bonds link Cys-979–Cys-1009, Cys-1002–Cys-1054, Cys-1019–Cys-1024, Cys-1055–Cys-1060, and Cys-1094–Cys-1098. A helical transmembrane segment spans residues 1116–1136 (MVVAVLIALLILSIFLFALCC). The segment at 1131 to 1148 (LFALCCPRRPSYKKDHKP) is binding to the ribonucleoprotein. The Cytoplasmic segment spans residues 1137–1148 (PRRPSYKKDHKP).

The protein belongs to the hantavirus envelope glycoprotein family. Homodimer. Homotetramer; forms heterotetrameric Gn-Gc spikes in the pre-fusion conformation. Interacts (via C-terminus) with the nucleoprotein. Interacts with host TUFM; this interaction contributes to the virus-induced degradation of mitochondria by autophagy, which leads to degradation of host MAVS and inhibition of type I interferon (IFN) responses. Interacts with host MAP1LC3B; this interaction contributes to the virus-induced degradation of mitochondria by autophagy, which leads to degradation of host MAVS and inhibition of type I interferon (IFN) responses. As to quaternary structure, homodimer. Homotetramer; forms heterotetrameric Gn-Gc spikes in the pre-fusion conformation. Homotrimer; forms homotrimer in the post-fusion conformation at acidic pH. Interacts (via C-terminus) with the nucleoprotein. Post-translationally, envelope polyprotein precursor is quickly cleaved in vivo just after synthesis, presumably by host signal peptidase.

Its subcellular location is the virion membrane. It is found in the host cell surface. The protein localises to the host Golgi apparatus membrane. It localises to the host endoplasmic reticulum membrane. The protein resides in the host mitochondrion. Forms homotetramers with glycoprotein C at the surface of the virion. Attaches the virion to host cell receptors including integrin ITGAV/ITGB3. This attachment induces virion internalization predominantly through clathrin-dependent endocytosis. Mediates the assembly and budding of infectious virus particles through its interaction with the nucleocapsid protein and the viral genome. May dysregulate normal immune and endothelial cell responses through an ITAM motif. Translocates to mitochondria, binds to host TUFM and recruits MAP1LC3B. These interactions induce mitochondrial autophagy and therefore destruction of host MAVS leading to inhibition of type I interferon (IFN) responses. Concomitant breakdown of glycoprotein N is apparently prevented by the nucleoprotein that may inhibit Gn-stimulated autophagosome-lysosome fusion. Interacts with the viral genomic RNA. Functionally, forms heterooctamers with glycoprotein N at the surface of the virion. Attaches the virion to host cell receptors including integrin ITGAV/ITGB3. This attachment induces virion internalization predominantly through clathrin-dependent endocytosis. Class II fusion protein that promotes fusion of viral membrane with host endosomal membrane after endocytosis of the virion. The sequence is that of Envelopment polyprotein (GP) from Homo sapiens (Human).